The primary structure comprises 60 residues: Potassium channel toxin alpha-KTx 12.7 (60 aa).

A signal peptide spans 1-22; it reads MSNMPVLIITLLLFSMYISTAA. 3 cysteine pairs are disulfide-bonded: Cys-30/Cys-51, Cys-36/Cys-56, and Cys-40/Cys-58.

It belongs to the short scorpion toxin superfamily. Potassium channel inhibitor family. Alpha-KTx 12 subfamily. In terms of tissue distribution, expressed by the venom gland.

It localises to the secreted. Its function is as follows. Inhibits voltage-gated potassium channels. This chain is Potassium channel toxin alpha-KTx 12.7, found in Lychas mucronatus (Chinese swimming scorpion).